Reading from the N-terminus, the 430-residue chain is Tyrosine--tRNA ligase (430 aa).

Position 32 (Y32) interacts with L-tyrosine. Residues 37–46 (PTADSLHIGH) carry the 'HIGH' region motif. Residues Y172 and Q176 each coordinate L-tyrosine. The 'KMSKS' region signature appears at 232–236 (KFGKT). Residue K235 participates in ATP binding. The 68-residue stretch at 362 to 429 (VKAVDLFVDN…GKKNYYLIIA (68 aa)) folds into the S4 RNA-binding domain.

Belongs to the class-I aminoacyl-tRNA synthetase family. TyrS type 1 subfamily. In terms of assembly, homodimer.

The protein localises to the cytoplasm. It carries out the reaction tRNA(Tyr) + L-tyrosine + ATP = L-tyrosyl-tRNA(Tyr) + AMP + diphosphate + H(+). Functionally, catalyzes the attachment of tyrosine to tRNA(Tyr) in a two-step reaction: tyrosine is first activated by ATP to form Tyr-AMP and then transferred to the acceptor end of tRNA(Tyr). This chain is Tyrosine--tRNA ligase, found in Bacteroides fragilis (strain ATCC 25285 / DSM 2151 / CCUG 4856 / JCM 11019 / LMG 10263 / NCTC 9343 / Onslow / VPI 2553 / EN-2).